We begin with the raw amino-acid sequence, 110 residues long: Large ribosomal subunit protein uL22 (110 aa).

The protein belongs to the universal ribosomal protein uL22 family. As to quaternary structure, part of the 50S ribosomal subunit.

In terms of biological role, this protein binds specifically to 23S rRNA; its binding is stimulated by other ribosomal proteins, e.g. L4, L17, and L20. It is important during the early stages of 50S assembly. It makes multiple contacts with different domains of the 23S rRNA in the assembled 50S subunit and ribosome. The globular domain of the protein is located near the polypeptide exit tunnel on the outside of the subunit, while an extended beta-hairpin is found that lines the wall of the exit tunnel in the center of the 70S ribosome. In Histophilus somni (strain 129Pt) (Haemophilus somnus), this protein is Large ribosomal subunit protein uL22.